The sequence spans 41 residues: Large ribosomal subunit protein bL36B (41 aa).

It belongs to the bacterial ribosomal protein bL36 family.

This Actinobacillus pleuropneumoniae serotype 5b (strain L20) protein is Large ribosomal subunit protein bL36B.